A 363-amino-acid chain; its full sequence is Sensor protein BasS (363 aa).

Over 1 to 13 (MHFLRRPISLRQR) the chain is Cytoplasmic. A helical transmembrane segment spans residues 14–34 (LILTIGAILLVFELISVFWLW). Residues 35 to 64 (HESTEQIQLFEQALRDNRNNDRHIMREIRE) lie on the Periplasmic side of the membrane. A helical transmembrane segment spans residues 65–88 (AVASLIVPGVFMVSLTLFICYQAV). In terms of domain architecture, HAMP spans 89–141 (RRITRPLAELQKELEARTADNLTPIAIHSATLEIEAVVSALNDLVSRLTSTLD). Over 89–363 (RRITRPLAEL…KKDQYVANQI (275 aa)) the chain is Cytoplasmic. Residues 149-357 (DVAHELRTPL…RAWVRLKKDQ (209 aa)) enclose the Histidine kinase domain. H152 carries the post-translational modification Phosphohistidine; by autocatalysis.

In terms of processing, autophosphorylated.

It is found in the cell inner membrane. It catalyses the reaction ATP + protein L-histidine = ADP + protein N-phospho-L-histidine.. In terms of biological role, member of the two-component regulatory system BasS/BasR Autophosphorylates and activates BasR by phosphorylation. The polypeptide is Sensor protein BasS (basS) (Escherichia coli (strain K12)).